The sequence spans 126 residues: UPF0102 protein Mlg_2205 (126 aa).

It belongs to the UPF0102 family.

This Alkalilimnicola ehrlichii (strain ATCC BAA-1101 / DSM 17681 / MLHE-1) protein is UPF0102 protein Mlg_2205.